A 209-amino-acid chain; its full sequence is Pyridoxal phosphate homeostasis protein (209 aa).

Lysine 31 carries the N6-(pyridoxal phosphate)lysine modification.

It belongs to the pyridoxal phosphate-binding protein YggS/PROSC family.

Its function is as follows. Pyridoxal 5'-phosphate (PLP)-binding protein, which is involved in PLP homeostasis. The polypeptide is Pyridoxal phosphate homeostasis protein (Deinococcus radiodurans (strain ATCC 13939 / DSM 20539 / JCM 16871 / CCUG 27074 / LMG 4051 / NBRC 15346 / NCIMB 9279 / VKM B-1422 / R1)).